Consider the following 1300-residue polypeptide: Phospholipid-transporting ATPase IK (1300 aa).

Residues 1–11 (MGTGPAQTPRS) show a composition bias toward polar residues. The disordered stretch occupies residues 1–98 (MGTGPAQTPR…SLGQREDLQD (98 aa)). Over 1–149 (MGTGPAQTPR…TAKYNFYSFL (149 aa)) the chain is Cytoplasmic. The segment covering 65 to 74 (RRHKAQPGRA) has biased composition (basic residues). Residues 150–171 (PLNLYEQFHRVSNLFFLIIIIL) traverse the membrane as a helical segment. The Exoplasmic loop portion of the chain corresponds to 172-177 (QSIPDI). Residues 178 to 197 (STLPWFSLSTPMVCLLFIRA) traverse the membrane as a helical segment. Topologically, residues 198-381 (TRDLVDDMGR…TKLDLLMNKL (184 aa)) are cytoplasmic. Residues 382-403 (VVVIFISVVLVCLVLAFGFGFS) traverse the membrane as a helical segment. Residues 404 to 430 (VKEFKDHHYYLSGVHGSSVAAESFFVF) are Exoplasmic loop-facing. Residues 431 to 452 (WSFLILLSVTIPMSMFILSEFI) traverse the membrane as a helical segment. Residues 453–995 (YLGNSVFIDW…GRWSYVRICK (543 aa)) lie on the Cytoplasmic side of the membrane. Residue Asp495 is the 4-aspartylphosphate intermediate of the active site. Residues Asp495, Lys496, Thr497, Glu596, Phe637, Lys660, Arg693, Thr763, Gly764, Asp765, Arg913, and Lys919 each coordinate ATP. Asp495 is a binding site for Mg(2+). Thr497 contributes to the Mg(2+) binding site. Residue Asp939 coordinates Mg(2+). Asn942 and Asp943 together coordinate ATP. Asp943 is a Mg(2+) binding site. Residues 996-1016 (FLRYFFYKSMASMMVQVWFAC) traverse the membrane as a helical segment. Over 1017 to 1028 (YNGFTGQPLYEG) the chain is Exoplasmic loop. A helical membrane pass occupies residues 1029-1048 (WFLALFNLLYSTLPVLYIGL). Residues 1049 to 1078 (FEQDVSAEQSLEKPELYVVGQKDELFNYWV) lie on the Cytoplasmic side of the membrane. The helical transmembrane segment at 1079 to 1100 (FVQAIAHGVTTSLVNFFMTLWI) threads the bilayer. Residues 1101–1112 (SRDTAGPASFSD) lie on the Exoplasmic loop side of the membrane. The chain crosses the membrane as a helical span at residues 1113 to 1135 (HQSFAVVVALSCLLSITMEVILI). The Cytoplasmic segment spans residues 1136-1141 (IKYWTA). Residues 1142-1162 (LCVATILLSLGFYAIMTTTTQ) traverse the membrane as a helical segment. Topologically, residues 1163–1182 (SFWLFRVSPTTFPFLYADLS) are exoplasmic loop. The chain crosses the membrane as a helical span at residues 1183–1207 (VMSSPSILLVVLLSVSINTFPVLAL). Residues 1208–1300 (RVIFPALKEL…EAASSPKESQ (93 aa)) lie on the Cytoplasmic side of the membrane. The segment at 1272-1300 (RGPGVSSDIASESLDPSDEEAASSPKESQ) is disordered.

Belongs to the cation transport ATPase (P-type) (TC 3.A.3) family. Type IV subfamily. Mg(2+) serves as cofactor. As to expression, isoform 3 was only detected in testis.

The protein localises to the cytoplasmic vesicle. It localises to the secretory vesicle. It is found in the acrosome membrane. Its subcellular location is the endoplasmic reticulum membrane. It carries out the reaction ATP + H2O + phospholipidSide 1 = ADP + phosphate + phospholipidSide 2.. It catalyses the reaction a 1,2-diacyl-sn-glycero-3-phospho-L-serine(out) + ATP + H2O = a 1,2-diacyl-sn-glycero-3-phospho-L-serine(in) + ADP + phosphate + H(+). Its function is as follows. P4-ATPase flippase which catalyzes the hydrolysis of ATP coupled to the transport of aminophospholipids from the outer to the inner leaflet of various membranes and ensures the maintenance of asymmetric distribution of phospholipids. Phospholipid translocation also seems to be implicated in vesicle formation and in uptake of lipid signaling molecules. May be responsible for the maintenance of asymmetric distribution of phosphatidylserine (PS) in spermatozoa membranes. Involved in acrosome reactions and binding of spermatozoa to zona pellucida. This is Phospholipid-transporting ATPase IK from Homo sapiens (Human).